Reading from the N-terminus, the 172-residue chain is Large ribosomal subunit protein bL17 (172 aa).

The segment at 123–172 (ATGSKRAQTEEAASQEPAAEAGKQPAEGATSVQTAEAADASQAEGEAEEK) is disordered. Over residues 132–143 (EEAASQEPAAEA) the composition is skewed to low complexity.

It belongs to the bacterial ribosomal protein bL17 family. As to quaternary structure, part of the 50S ribosomal subunit. Contacts protein L32.

This is Large ribosomal subunit protein bL17 from Thermobifida fusca (strain YX).